Reading from the N-terminus, the 519-residue chain is Bifunctional purine biosynthesis protein PurH (519 aa).

An MGS-like domain is found at 1-147 (MAKITRALIS…KNNHDVTVLV (147 aa)).

It belongs to the PurH family.

It carries out the reaction (6R)-10-formyltetrahydrofolate + 5-amino-1-(5-phospho-beta-D-ribosyl)imidazole-4-carboxamide = 5-formamido-1-(5-phospho-D-ribosyl)imidazole-4-carboxamide + (6S)-5,6,7,8-tetrahydrofolate. The catalysed reaction is IMP + H2O = 5-formamido-1-(5-phospho-D-ribosyl)imidazole-4-carboxamide. It functions in the pathway purine metabolism; IMP biosynthesis via de novo pathway; 5-formamido-1-(5-phospho-D-ribosyl)imidazole-4-carboxamide from 5-amino-1-(5-phospho-D-ribosyl)imidazole-4-carboxamide (10-formyl THF route): step 1/1. The protein operates within purine metabolism; IMP biosynthesis via de novo pathway; IMP from 5-formamido-1-(5-phospho-D-ribosyl)imidazole-4-carboxamide: step 1/1. In Trichlorobacter lovleyi (strain ATCC BAA-1151 / DSM 17278 / SZ) (Geobacter lovleyi), this protein is Bifunctional purine biosynthesis protein PurH.